The primary structure comprises 86 residues: Large ribosomal subunit protein bL27 (86 aa).

A compositionally biased stretch (gly residues) spans 1–10 (MAQKKGGGST). A disordered region spans residues 1-21 (MAQKKGGGSTRNGRDSESKRL).

It belongs to the bacterial ribosomal protein bL27 family.

In Ralstonia nicotianae (strain ATCC BAA-1114 / GMI1000) (Ralstonia solanacearum), this protein is Large ribosomal subunit protein bL27.